The primary structure comprises 61 residues: Protein TfaX (61 aa).

The protein belongs to the tfa family.

Functionally, might play a role in cell growth during glycolysis. The sequence is that of Protein TfaX (tfaX) from Escherichia coli (strain K12).